The chain runs to 132 residues: Ribosome-binding factor A (132 aa).

It belongs to the RbfA family. Monomer. Binds 30S ribosomal subunits, but not 50S ribosomal subunits or 70S ribosomes.

The protein resides in the cytoplasm. Functionally, one of several proteins that assist in the late maturation steps of the functional core of the 30S ribosomal subunit. Associates with free 30S ribosomal subunits (but not with 30S subunits that are part of 70S ribosomes or polysomes). Required for efficient processing of 16S rRNA. May interact with the 5'-terminal helix region of 16S rRNA. In Pseudomonas putida (strain W619), this protein is Ribosome-binding factor A.